The following is a 112-amino-acid chain: MEFDSYIDWYNNLLTMPLNDVILGVKDTIEDKTVYLSLSDSKVIKMDNTSFVMGYYYQVVLSVKDVDDELVGLVGNVLQNGWNMTNWSENSHLYNYTGTVYLPCGAGGQAWQ.

This sequence belongs to the skunalikevirus head completion protein 2 family.

The protein resides in the virion. In terms of biological role, probably functions as a stopper that is part of the head-tail connector and that locks the viral DNA in the capsid. During assembly, functions as a docking platform which the preassembled tail can bind to. Plays a role in morphogenesis of the virion capsid after genome packaging. The chain is Probable head completion protein 2 from Lactococcus phage p2 (Lactococcus lactis bacteriophage p2).